The chain runs to 418 residues: MKLGDWKFCLLLFQLMFLTNVCLSDLSFNPYKWPVNQLRRVIGAVKVTNTSNYFGFSLYENLNSNGNVFISPYSLASVMAMLYLGARGVTKNEMDLTLGYNSVNLNSEDLVLGFQQSLLLLNAESKEYQLETANSLMIQNTFNILDNYKRMLEDKFGANVQDVDFINKAELVQRYINAWVAFKTKNKIPILLNEPLKPETRLAFFNAVYFKGVWETKFDSALTRRATFYNNGYVPTQVPMMMLRGIFPFAYVSSLRSYVLELPYKGHEVSMLLLLPKDRNGISDLERDLSSSSLDSVTSNLREIGVLVTIPKFKLEETYEDDLKQSLESMGMTSLFSEANANLEGITGHRDLFVTKITHRTLIEVNEEGTEASGISSVVAGVRSGWKRPTFTADHPFVFFIRHNRSGIILFMGRVSQL.

Residues 1 to 24 (MKLGDWKFCLLLFQLMFLTNVCLS) form the signal peptide. N49 and N404 each carry an N-linked (GlcNAc...) asparagine glycan.

The protein belongs to the serpin family. Monomer. Forms a covalent heterodimer with clotting factor C. Interacts with big defensin. N-glycosylated. In terms of tissue distribution, expressed in hemocytes (at protein level).

It localises to the secreted. Serine protease inhibitor that specifically inhibits clotting factor C. Does not inhibit clotting factor B or proclotting enzyme. This chain is Intracellular coagulation inhibitor 1, found in Tachypleus tridentatus (Japanese horseshoe crab).